The chain runs to 457 residues: Siroheme synthase (457 aa).

The segment at 1–204 (MEIFPISLKL…DNLDIANQMM (204 aa)) is precorrin-2 dehydrogenase /sirohydrochlorin ferrochelatase. NAD(+) is bound by residues 22–23 (HI) and 43–44 (PD). S129 bears the Phosphoserine mark. The tract at residues 216-457 (GEVYLVGAGP…VSLREQLQWL (242 aa)) is uroporphyrinogen-III C-methyltransferase. P225 contacts S-adenosyl-L-methionine. Residue D248 is the Proton acceptor of the active site. The active-site Proton donor is the K270. S-adenosyl-L-methionine-binding positions include 301–303 (GGD), I306, 331–332 (TA), M383, and G412.

In the N-terminal section; belongs to the precorrin-2 dehydrogenase / sirohydrochlorin ferrochelatase family. It in the C-terminal section; belongs to the precorrin methyltransferase family.

It catalyses the reaction uroporphyrinogen III + 2 S-adenosyl-L-methionine = precorrin-2 + 2 S-adenosyl-L-homocysteine + H(+). The enzyme catalyses precorrin-2 + NAD(+) = sirohydrochlorin + NADH + 2 H(+). The catalysed reaction is siroheme + 2 H(+) = sirohydrochlorin + Fe(2+). It participates in cofactor biosynthesis; adenosylcobalamin biosynthesis; precorrin-2 from uroporphyrinogen III: step 1/1. The protein operates within cofactor biosynthesis; adenosylcobalamin biosynthesis; sirohydrochlorin from precorrin-2: step 1/1. It functions in the pathway porphyrin-containing compound metabolism; siroheme biosynthesis; precorrin-2 from uroporphyrinogen III: step 1/1. Its pathway is porphyrin-containing compound metabolism; siroheme biosynthesis; siroheme from sirohydrochlorin: step 1/1. It participates in porphyrin-containing compound metabolism; siroheme biosynthesis; sirohydrochlorin from precorrin-2: step 1/1. Functionally, multifunctional enzyme that catalyzes the SAM-dependent methylations of uroporphyrinogen III at position C-2 and C-7 to form precorrin-2 via precorrin-1. Then it catalyzes the NAD-dependent ring dehydrogenation of precorrin-2 to yield sirohydrochlorin. Finally, it catalyzes the ferrochelation of sirohydrochlorin to yield siroheme. The chain is Siroheme synthase from Acinetobacter baylyi (strain ATCC 33305 / BD413 / ADP1).